Here is a 251-residue protein sequence, read N- to C-terminus: Isoprenyl transferase (251 aa).

Aspartate 24 is a catalytic residue. Aspartate 24 is a Mg(2+) binding site. Substrate is bound by residues 25 to 28 (GNGR), tryptophan 29, arginine 37, histidine 41, and 69 to 71 (STE). Asparagine 72 functions as the Proton acceptor in the catalytic mechanism. Substrate-binding positions include tryptophan 73, arginine 75, arginine 186, and 192–194 (RIS). Glutamate 205 is a binding site for Mg(2+).

This sequence belongs to the UPP synthase family. As to quaternary structure, homodimer. Mg(2+) is required as a cofactor.

Catalyzes the condensation of isopentenyl diphosphate (IPP) with allylic pyrophosphates generating different type of terpenoids. This chain is Isoprenyl transferase, found in Chromobacterium violaceum (strain ATCC 12472 / DSM 30191 / JCM 1249 / CCUG 213 / NBRC 12614 / NCIMB 9131 / NCTC 9757 / MK).